A 995-amino-acid chain; its full sequence is KN motif and ankyrin repeat domain-containing protein 4 (995 aa).

Disordered regions lie at residues 1 to 29 (MEKT…SVET) and 68 to 127 (TLPR…EVSY). Residues 101-124 (LGTQEQNQSPPLGNAPQASTSRSE) show a composition bias toward polar residues. A coiled-coil region spans residues 343-404 (SSLKQQVSAL…EGQFHQENAK (62 aa)). Disordered regions lie at residues 443–467 (ESWG…GNQS), 503–558 (EAGT…PTDA), 617–642 (QAHP…TSLK), 663–705 (LQFV…PDHK), and 721–740 (PEGT…VPHS). Residues 511-523 (GPQGGTRGAGGFL) show a composition bias toward gly residues. Residues 526–549 (SDRKTPPAGREETSSNLPGKEHPG) show a composition bias toward basic and acidic residues. Residues 625 to 640 (PASSSSPPVEISPSTS) show a composition bias toward low complexity. Over residues 680 to 693 (TSGEDSTPEDLSDS) the composition is skewed to acidic residues. Positions 694-705 (EAEKKCDGPDHK) are enriched in basic and acidic residues. ANK repeat units lie at residues 823–853 (NGNT…NVDH), 862–890 (VMIT…NVNI), 895–924 (GGQT…DVNL), 928–958 (DGSS…DSSL), and 962–992 (AGRT…QGRS).

As to expression, strongly expressed in colon, liver, lung, skeletal muscle and kidney.

The protein resides in the cytoplasm. Its function is as follows. May be involved in the control of cytoskeleton formation by regulating actin polymerization. The protein is KN motif and ankyrin repeat domain-containing protein 4 (KANK4) of Homo sapiens (Human).